The following is a 181-amino-acid chain: Oligoribonuclease (181 aa).

Positions 8–171 (LIWIDLEMTG…DDIRESVAEL (164 aa)) constitute an Exonuclease domain. Residue Tyr-129 is part of the active site.

Belongs to the oligoribonuclease family.

The protein resides in the cytoplasm. 3'-to-5' exoribonuclease specific for small oligoribonucleotides. In Enterobacter sp. (strain 638), this protein is Oligoribonuclease.